A 1165-amino-acid polypeptide reads, in one-letter code: MGTAAGLLLAALLLAGTSWAQREVNIQQGPLYRAEGSQISIWCNVRGYQGPSEQNFLWSIYLPSAPEKEIQMVGTSDPSFSYAIYSQRVRSGDIYVERVSGDHALLHIRQLQEQDAGEYECHTPNTDPTYHGSYSAKMNLHVIPDTLTVSSPAQTLQKVEGGSLQVTCEVSQNSSQHTHLSVSWLRISGGEEHEIISLTQNLSVRAGPTYAQKHSVGDVRMDKLGDSTFRLTLYNLHPSDQGEIHCVGTEWIQDPDGTWFPLTQKRSEGTSVTVQPTDKEFNVRLETERRTYGAGDMASLRCIIDAQNPAERLFAVSWAFNSSLIASQSPGGVPSLTGEYAKREDRGEVRVGKDSDIVFSLKIFHLRPEDSGKYNCRVTERERGPSGELIDRESKRPKNIPISVLPLRTSLTVTVTANSSSVLEGVRLSLTCSVASLAGPQSRISASWHLQDKQGRQREVVRQDRDGVTWAGEQYRERLGTGELRLIRSGSDTFSLELEGSQRTDTGSYECRVAEWVPATDGEWQLLGERSAQANVDIMALETGFAVTAITRTPGVSYFDSFDLQCILKPHYPPWVGVSVTWRFQPAGGGDTHDLVTFSRAGGVQWGERAGSFRGRSVVEKGDSTHTVKLSVSRASDSEAGKYQCVAELWRWEYRGTWTQLAERASNLLEIRVQRPVPRLQVSKVTRTLSVVEGSQVTLSCSIRSQTGPDSRFAVLWFMRQPSGADGKLIVRSNTGMEYGTYAEEASLKGRLQLEVTAPGHYTLTLQGAHADDSGSYYCQVEEWAMDPNQAWYRLAEEASGMTEIRVRVPDANLQLDQIPRNVSALEGQSFTVTCHVLNRTLPDSRLSLEWLSWWAGHMERRALVRLTVDGVTILGSVEEENVAPGLPSRMQVSQPSLGLYALTLRGTEVQDTGTYSCLVQEWLQDPRGQWYKRTEERSGATYVSVRQPDPALQLDSSLLNVSLMEGGHFDLDCVVSSRSRPDSQLAISWSLQGASRGAEQETLLNVDRSGVWAPMAPRWEGRLQQLQLSPTLFRLHVPRVGQGDSGNYTCLVQEWLQGPRGNWYLLAQDESLIGWIRVQSKESNLQSTICANDALFYLVFFYPFPIFGILIITILLVRFRHRPTSKPGEGKNGVPLLWIKEPHLNYSPTCLEPPVLSIHPGTID.

An N-terminal signal peptide occupies residues methionine 1 to alanine 20. The Extracellular segment spans residues glutamine 21–alanine 1095. 8 consecutive Ig-like C2-type domains span residues arginine 22–asparagine 139, proline 144–leucine 262, proline 276–serine 386, proline 406–leucine 527, phenylalanine 545–leucine 661, proline 678–serine 800, proline 810–arginine 934, and proline 951–leucine 1067. Cystine bridges form between cysteine 43–cysteine 121 and cysteine 168–cysteine 246. The EWI motif signature appears at glutamate 250–isoleucine 252. 6 cysteine pairs are disulfide-bonded: cysteine 302–cysteine 376, cysteine 432–cysteine 511, cysteine 566–cysteine 645, cysteine 701–cysteine 779, cysteine 835–cysteine 918, and cysteine 974–cysteine 1051. A helical transmembrane segment spans residues leucine 1096–leucine 1116. The Cytoplasmic portion of the chain corresponds to leucine 1117–aspartate 1165.

The protein localises to the membrane. The chain is Immunoglobulin superfamily member 3 (igsf3) from Xenopus laevis (African clawed frog).